We begin with the raw amino-acid sequence, 375 residues long: D-apiose dehydrogenase (375 aa).

NAD(+) is bound at residue 29–30 (FF). Trp38, Arg39, Ile41, and Ala44 together coordinate Mg(2+). NAD(+) contacts are provided by residues Asp51, Ser93, 111–112 (QK), Asn140, and 179–181 (QPY). Lys112 is a substrate binding site. Residues Gln179, Asp192, His196, and Tyr246 each contribute to the substrate site.

Belongs to the Gfo/Idh/MocA family.

The enzyme catalyses D-apiofuranose + NAD(+) = D-apionolactone + NADH + H(+). It functions in the pathway carbohydrate metabolism. Its function is as follows. Involved in catabolism of D-apiose. Catalyzes oxidation of D-apiose to D-apionolactone. The polypeptide is D-apiose dehydrogenase (Paraburkholderia graminis (strain ATCC 700544 / DSM 17151 / LMG 18924 / NCIMB 13744 / C4D1M)).